We begin with the raw amino-acid sequence, 473 residues long: UDP-glycosyltransferase 71B1 (473 aa).

The active-site Proton acceptor is the histidine 15. Position 15 (histidine 15) interacts with an anthocyanidin. The active-site Charge relay is aspartate 110. Positions 132, 342, 344, 359, 362, 363, 364, and 367 each coordinate UDP-alpha-D-glucose. Alanine 382 contacts an anthocyanidin. Glutamate 383 and glutamine 384 together coordinate UDP-alpha-D-glucose.

This sequence belongs to the UDP-glycosyltransferase family.

It carries out the reaction a flavonol + UDP-alpha-D-glucose = a flavonol 3-O-beta-D-glucoside + UDP + H(+). In terms of biological role, possesses quercetin 3-O-glucosyltransferase activity in vitro. Also active in vitro on benzoates and benzoate derivatives. This chain is UDP-glycosyltransferase 71B1 (UGT71B1), found in Arabidopsis thaliana (Mouse-ear cress).